Reading from the N-terminus, the 366-residue chain is Mitochondrial division protein fszB (366 aa).

GTP-binding positions include 70 to 74 (GGGGN), 157 to 159 (GTG), Glu190, and Asp238.

This sequence belongs to the FtsZ family.

It localises to the mitochondrion. Its function is as follows. Probably involved in mitochondrion division process. Binds to and hydrolyzes GTP. This chain is Mitochondrial division protein fszB (fszB), found in Dictyostelium discoideum (Social amoeba).